The following is a 149-amino-acid chain: MRFLAATILLLALVAASQAEPLHFKDCGSKVGVIKEVNVSPCPTDPCQLHKGQSYSVNITFTSGTQSQNSTALVHGILEGIRVPFPIPEPDGCKSGINCPIQKDKVYSYLNKLPVKNEYPSIKLVVEWKLEDDKKNNLFCWEIPVQITS.

Residues 1 to 19 form the signal peptide; it reads MRFLAATILLLALVAASQA. 3 disulfides stabilise this stretch: C27–C140, C42–C47, and C93–C99. 2 N-linked (GlcNAc...) asparagine glycosylation sites follow: N58 and N69. Residue K116 is modified to N6-acetyllysine.

Belongs to the NPC2 family. In terms of assembly, interacts with NPC1 (via the second lumenal domain) in a cholestrol-dependent manner. Interacts with NUS1/NgBR, the interaction stabilizes NCP2 and regulates cholesterol trafficking. Interacts with DHDDS. Interacts with NEDD4L (via C2 domain). Interacts with NPC1L1. N-glycosylated. In terms of tissue distribution, detected in liver and bile. Detected in epididymis (at protein level). Detected in caput epididymis, corpus epididymis, cauda epididymis and ovary.

Its subcellular location is the secreted. It is found in the endoplasmic reticulum. The protein resides in the lysosome. The catalysed reaction is cholesterol(in) = cholesterol(out). Functionally, intracellular cholesterol transporter which acts in concert with NPC1 and plays an important role in the egress of cholesterol from the lysosomal compartment. Unesterified cholesterol that has been released from LDLs in the lumen of the late endosomes/lysosomes is transferred by NPC2 to the cholesterol-binding pocket in the N-terminal domain of NPC1. May bind and mobilize cholesterol that is associated with membranes. NPC2 binds cholesterol with a 1:1 stoichiometry. Can bind a variety of sterols, including lathosterol, desmosterol and the plant sterols stigmasterol and beta-sitosterol. The secreted form of NCP2 regulates biliary cholesterol secretion via stimulation of ABCG5/ABCG8-mediated cholesterol transport. The protein is NPC intracellular cholesterol transporter 2 of Mus musculus (Mouse).